The chain runs to 110 residues: MFEKTNRMNLLFDFYQELLTTKQKSYVSFYYLDDYSLGEIAEEFEVSRQAIYDNIKRTEESLEKYEEKLGMLRKYQQREKLFDQLEAQLTKKNFLDEQVKDTLEQLKNID.

The protein belongs to the UPF0122 family.

In terms of biological role, might take part in the signal recognition particle (SRP) pathway. This is inferred from the conservation of its genetic proximity to ftsY/ffh. May be a regulatory protein. The chain is UPF0122 protein lin1916 from Listeria innocua serovar 6a (strain ATCC BAA-680 / CLIP 11262).